Here is a 358-residue protein sequence, read N- to C-terminus: Secreted protein RBT4 (358 aa).

The signal sequence occupies residues M1–A19. 3 stretches are compositionally biased toward low complexity: residues V48–A63, T153–P174, and A189–S200. Disordered regions lie at residues V48–N98 and G144–F203. One can recognise an SCP domain in the interval L216–Y332.

The protein belongs to the CRISP family.

The protein resides in the secreted. In terms of biological role, secreted protein that acts as a virulence factor during infections such as in posttraumatic corneal infections. Acts as an important antigen in patients with systemic candidiasis and plays a role in the protection against phagocyte attack. In Candida albicans (strain SC5314 / ATCC MYA-2876) (Yeast), this protein is Secreted protein RBT4 (RBT4).